The following is a 497-amino-acid chain: Probable FAD-binding monooxygenase AlmA (497 aa).

The chain crosses the membrane as a helical span at residues 4-24 (QVDVLIIGAGISGIGLAVHLS). Residues Ser15, Glu36, Asp56, Phe62, and Val104 each coordinate FAD. NADP(+) is bound at residue 54-56 (RSD). Residues 184–190 (SGATAIT), 208–209 (RS), and 292–293 (RL) contribute to the NADP(+) site. Val395 lines the FAD pocket.

It belongs to the FAD-binding monooxygenase family. FAD is required as a cofactor.

The protein localises to the cell membrane. Its pathway is hydrocarbon metabolism; alkane degradation. Is involved in the degradation of n-alkanes with C chain lengths of 32 and longer. Allows Acinetobacter sp. strain DSM 17874 to grow on long-chain n-alkanes such as dotriacontane (C32H66) or hexatriacontane (C36H74) as a sole carbon source. The protein is Probable FAD-binding monooxygenase AlmA of Acinetobacter sp.